A 290-amino-acid chain; its full sequence is Probable 2-(5''-triphosphoribosyl)-3'-dephosphocoenzyme-A synthase (290 aa).

The protein belongs to the CitG/MdcB family.

It catalyses the reaction 3'-dephospho-CoA + ATP = 2'-(5''-triphospho-alpha-D-ribosyl)-3'-dephospho-CoA + adenine. In terms of biological role, involved in the formation of 2-(5''-phosphoribosyl)-3'-dephosphocoenzyme-A, the prosthetic group of the acyl-carrier protein of the malonate decarboxylase. This chain is Probable 2-(5''-triphosphoribosyl)-3'-dephosphocoenzyme-A synthase, found in Stutzerimonas stutzeri (strain A1501) (Pseudomonas stutzeri).